The primary structure comprises 249 residues: Putative TrmH family tRNA/rRNA methyltransferase (249 aa).

3 residues coordinate S-adenosyl-L-methionine: G196, I216, and L225.

It belongs to the class IV-like SAM-binding methyltransferase superfamily. RNA methyltransferase TrmH family.

The polypeptide is Putative TrmH family tRNA/rRNA methyltransferase (Staphylococcus saprophyticus subsp. saprophyticus (strain ATCC 15305 / DSM 20229 / NCIMB 8711 / NCTC 7292 / S-41)).